The following is a 331-amino-acid chain: Glutaminase (331 aa).

S77, N129, E173, N180, Y204, Y256, and V274 together coordinate substrate.

Belongs to the glutaminase family. As to quaternary structure, homotetramer.

It carries out the reaction L-glutamine + H2O = L-glutamate + NH4(+). The protein is Glutaminase of Oceanobacillus iheyensis (strain DSM 14371 / CIP 107618 / JCM 11309 / KCTC 3954 / HTE831).